The sequence spans 213 residues: Adenylate kinase (213 aa).

10-15 is a binding site for ATP; that stretch reads GAGKGT. The interval 30-59 is NMP; it reads STGDMFRAAMANQTEMGVLAKSYIDKGDLV. Residues Thr31, Arg36, 57-59, 86-89, and Gln93 each bind AMP; these read DLV and GYPR. The tract at residues 127–160 is LID; sequence GRIINKKTGETFHKIFNPPVGDYKEEDFYQREDD. Residues Arg128 and 137–138 each bind ATP; that span reads TF. Residues Arg157 and Arg168 each contribute to the AMP site. Position 196 (Lys196) interacts with ATP.

Belongs to the adenylate kinase family. In terms of assembly, monomer.

The protein localises to the cytoplasm. The enzyme catalyses AMP + ATP = 2 ADP. The protein operates within purine metabolism; AMP biosynthesis via salvage pathway; AMP from ADP: step 1/1. In terms of biological role, catalyzes the reversible transfer of the terminal phosphate group between ATP and AMP. Plays an important role in cellular energy homeostasis and in adenine nucleotide metabolism. This is Adenylate kinase from Streptococcus equi subsp. zooepidemicus (strain H70).